The chain runs to 410 residues: Arginine deiminase (410 aa).

Cysteine 400 functions as the Amidino-cysteine intermediate in the catalytic mechanism.

It belongs to the arginine deiminase family.

The protein resides in the cytoplasm. It catalyses the reaction L-arginine + H2O = L-citrulline + NH4(+). It participates in amino-acid degradation; L-arginine degradation via ADI pathway; carbamoyl phosphate from L-arginine: step 1/2. In Streptococcus agalactiae serotype III (strain NEM316), this protein is Arginine deiminase.